Reading from the N-terminus, the 56-residue chain is Small ribosomal subunit protein uS14 (56 aa).

Cys21, Cys24, Cys39, and Cys42 together coordinate Zn(2+).

Belongs to the universal ribosomal protein uS14 family. Zn(2+) is required as a cofactor.

The sequence is that of Small ribosomal subunit protein uS14 (RPS29) from Griffithsia japonica (Red alga).